Reading from the N-terminus, the 419-residue chain is Putative zinc metalloprotease SP_0263 (419 aa).

Histidine 18 serves as a coordination point for Zn(2+). Residue glutamate 19 is part of the active site. A Zn(2+)-binding site is contributed by histidine 22. Helical transmembrane passes span 169–191 (LITN…WVLI), 345–367 (ILYF…IPAL), and 388–410 (EIET…AVTW).

This sequence belongs to the peptidase M50B family. The cofactor is Zn(2+).

The protein resides in the cell membrane. This is Putative zinc metalloprotease SP_0263 from Streptococcus pneumoniae serotype 4 (strain ATCC BAA-334 / TIGR4).